We begin with the raw amino-acid sequence, 599 residues long: Elongation factor 4 (599 aa).

The region spanning S5–E187 is the tr-type G domain. GTP is bound by residues D17–T22 and N134–D137.

The protein belongs to the TRAFAC class translation factor GTPase superfamily. Classic translation factor GTPase family. LepA subfamily.

It localises to the cell inner membrane. The enzyme catalyses GTP + H2O = GDP + phosphate + H(+). Functionally, required for accurate and efficient protein synthesis under certain stress conditions. May act as a fidelity factor of the translation reaction, by catalyzing a one-codon backward translocation of tRNAs on improperly translocated ribosomes. Back-translocation proceeds from a post-translocation (POST) complex to a pre-translocation (PRE) complex, thus giving elongation factor G a second chance to translocate the tRNAs correctly. Binds to ribosomes in a GTP-dependent manner. The chain is Elongation factor 4 from Pseudomonas putida (strain ATCC 47054 / DSM 6125 / CFBP 8728 / NCIMB 11950 / KT2440).